The following is a 49-amino-acid chain: Small ribosomal subunit protein uS19c (49 aa).

The protein belongs to the universal ribosomal protein uS19 family.

It is found in the plastid. The protein resides in the chloroplast. Functionally, protein S19 forms a complex with S13 that binds strongly to the 16S ribosomal RNA. This Sinapis alba (White mustard) protein is Small ribosomal subunit protein uS19c (rps19).